Consider the following 186-residue polypeptide: Large ribosomal subunit protein uL5m (186 aa).

The protein belongs to the universal ribosomal protein uL5 family.

Its subcellular location is the mitochondrion. The polypeptide is Large ribosomal subunit protein uL5m (RPL5) (Solanum tuberosum (Potato)).